Reading from the N-terminus, the 395-residue chain is Imidazolonepropionase (395 aa).

Residues histidine 72 and histidine 74 each coordinate Fe(3+). Positions 72 and 74 each coordinate Zn(2+). Arginine 81, tyrosine 144, and histidine 174 together coordinate 4-imidazolone-5-propanoate. Tyrosine 144 is a binding site for N-formimidoyl-L-glutamate. Histidine 231 lines the Fe(3+) pocket. Residue histidine 231 participates in Zn(2+) binding. Glutamate 234 is a 4-imidazolone-5-propanoate binding site. Aspartate 306 is a Fe(3+) binding site. Zn(2+) is bound at residue aspartate 306.

Belongs to the metallo-dependent hydrolases superfamily. HutI family. Requires Zn(2+) as cofactor. The cofactor is Fe(3+).

It localises to the cytoplasm. It catalyses the reaction 4-imidazolone-5-propanoate + H2O = N-formimidoyl-L-glutamate. It functions in the pathway amino-acid degradation; L-histidine degradation into L-glutamate; N-formimidoyl-L-glutamate from L-histidine: step 3/3. In terms of biological role, catalyzes the hydrolytic cleavage of the carbon-nitrogen bond in imidazolone-5-propanoate to yield N-formimidoyl-L-glutamate. It is the third step in the universal histidine degradation pathway. The chain is Imidazolonepropionase from Pyrobaculum arsenaticum (strain DSM 13514 / JCM 11321 / PZ6).